We begin with the raw amino-acid sequence, 557 residues long: Formate--tetrahydrofolate ligase 2 (557 aa).

66 to 73 (TPAGEGKT) serves as a coordination point for ATP.

It belongs to the formate--tetrahydrofolate ligase family.

It catalyses the reaction (6S)-5,6,7,8-tetrahydrofolate + formate + ATP = (6R)-10-formyltetrahydrofolate + ADP + phosphate. It functions in the pathway one-carbon metabolism; tetrahydrofolate interconversion. The sequence is that of Formate--tetrahydrofolate ligase 2 from Streptococcus pyogenes serotype M1.